The chain runs to 396 residues: Elongation factor Tu 1 (396 aa).

The 197-residue stretch at 10–206 (KPHVNVGTIG…ALDTYIPTPE (197 aa)) folds into the tr-type G domain. Residues 19–26 (GHVDHGKT) are G1. 19 to 26 (GHVDHGKT) contributes to the GTP binding site. A Mg(2+)-binding site is contributed by T26. Residues 60 to 64 (GITIN) form a G2 region. Residues 81-84 (DCPG) form a G3 region. GTP is bound by residues 81–85 (DCPGH) and 136–139 (NKCD). Positions 136-139 (NKCD) are G4. The tract at residues 174–176 (SAK) is G5.

Belongs to the TRAFAC class translation factor GTPase superfamily. Classic translation factor GTPase family. EF-Tu/EF-1A subfamily. In terms of assembly, monomer.

The protein localises to the cytoplasm. The enzyme catalyses GTP + H2O = GDP + phosphate + H(+). GTP hydrolase that promotes the GTP-dependent binding of aminoacyl-tRNA to the A-site of ribosomes during protein biosynthesis. The protein is Elongation factor Tu 1 of Acidovorax sp. (strain JS42).